We begin with the raw amino-acid sequence, 754 residues long: MTIINHTLGFPRVGLRRELKKAQESYWAGNATREELLAVGRELRARHWEQQKQAGVDLLPVGDFAWYDHVLTTSLLLGNVPARHQNKDGSIDIDTLFRIGRGRAPTGEPAAAAEMTKWFNTNYHYMVPEFVKGQQFKLSWTQLLDEVDEALALGHKIKPVLLGPVTYLWLGKVKGEPFDRLTLLNTILPVYQQVLAELAKRGIDWVQIDEPALVLELPPAWLEAFQPAYDALQGQVKLLLTTYFEGVSDNLATIAALPVQGLHVDLVHGKDDVAELHNRLPADWLLSAGLINGRNVWRADLTEKYAQIKDLVGKRELWVASSCSLLHSPIDLSVETRLDAEVKSWFAFALQKCGELALLRDALNSGDTAAITEWSAPIQARRHSTRVHNAEVEKRLAAITAQDSQRASPYEVRAQAQRQRFNLPKWPTTTIGSFPQTTEIRGLRLDFKKGNLDASHYRTGIAEHIKQAIVEQERLGLDVLVHGEAERNDMVEYFGEHLDGFIFTQNGWVQSYGSRCVKPPVVIGDVSRPQAITVDWAKYAQSLTAKPVKGMLTGPVTILCWSFPREDVSRETIAKQIALALRDEVADLEAAGIGIIQIDEPALREGLPLKRSDWDAYLQWGVEAFRLNAAVAKDDTQIHTHMCYCEFNDIMDSIAALDADVITIETSRSDMELLESFEAFEYPNEIGPGVYDIHSPNVPSVEWIEALLKKAAQRIPVERLWVNPDCGLKTRGWPETRAALANMVQAARNLRQSA.

5-methyltetrahydropteroyltri-L-glutamate contacts are provided by residues 17 to 20 (RELK) and K117. L-homocysteine contacts are provided by residues 431-433 (IGS) and E484. L-methionine-binding positions include 431-433 (IGS) and E484. 5-methyltetrahydropteroyltri-L-glutamate is bound by residues 515–516 (RC) and W561. Residue D599 participates in L-homocysteine binding. D599 contributes to the L-methionine binding site. E605 serves as a coordination point for 5-methyltetrahydropteroyltri-L-glutamate. The Zn(2+) site is built by H641, C643, and E665. H694 (proton donor) is an active-site residue. A Zn(2+)-binding site is contributed by C726.

This sequence belongs to the vitamin-B12 independent methionine synthase family. It depends on Zn(2+) as a cofactor.

The enzyme catalyses 5-methyltetrahydropteroyltri-L-glutamate + L-homocysteine = tetrahydropteroyltri-L-glutamate + L-methionine. The protein operates within amino-acid biosynthesis; L-methionine biosynthesis via de novo pathway; L-methionine from L-homocysteine (MetE route): step 1/1. Catalyzes the transfer of a methyl group from 5-methyltetrahydrofolate to homocysteine resulting in methionine formation. This Klebsiella pneumoniae subsp. pneumoniae (strain ATCC 700721 / MGH 78578) protein is 5-methyltetrahydropteroyltriglutamate--homocysteine methyltransferase.